A 712-amino-acid polypeptide reads, in one-letter code: Protein phosphatase 1 regulatory subunit 37 (712 aa).

Pro residues predominate over residues 1-12 (MEIPPQEAPPGP). Positions 1–47 (MEIPPQEAPPGPGADADADAEAETEEASAEAESPTGTSPPADGRLKA) are disordered. The segment covering 16–29 (ADADAEAETEEASA) has biased composition (acidic residues). Phosphoserine occurs at positions 56 and 62. LRR repeat units lie at residues 226-246 (SLAV…MLLA), 254-275 (NLRE…AQLG), 283-303 (SLQI…AYIC), 312-332 (GLVT…AFLG), and 340-360 (SLET…RNLK). Residues 492–680 (ESGELPAVGS…PPGLEAKGGS (189 aa)) are disordered. Residues 514–531 (SDSDSDSDREEQEEEEED) show a composition bias toward acidic residues. At S583 the chain carries Phosphoserine. Positions 605–626 (PPVPPTFVSSPPPSPPSPPASP) are enriched in pro residues. The span at 639-651 (SEAQPQLEPSQAG) shows a compositional bias: polar residues.

The protein belongs to the PPP1R37 family. As to quaternary structure, interacts with PPP1CA.

Functionally, inhibits phosphatase activity of protein phosphatase 1 (PP1) complexes. The chain is Protein phosphatase 1 regulatory subunit 37 (Ppp1r37) from Mus musculus (Mouse).